The following is a 508-amino-acid chain: Inosine-5'-monophosphate dehydrogenase (508 aa).

2 consecutive CBS domains span residues 111 to 170 (FITD…EITL) and 174 to 230 (MTTN…PDAS). NAD(+)-binding positions include D267 and 317 to 319 (GMG). K(+) is bound by residues G319 and G321. S322 contributes to the IMP binding site. C324 lines the K(+) pocket. C324 functions as the Thioimidate intermediate in the catalytic mechanism. IMP-binding positions include 357 to 359 (DGG), 380 to 381 (GF), and 404 to 408 (YRGMA). Residue R420 is the Proton acceptor of the active site. Q432 is a binding site for IMP. Position 492 (G492) interacts with K(+).

The protein belongs to the IMPDH/GMPR family. Homotetramer. K(+) serves as cofactor.

It carries out the reaction IMP + NAD(+) + H2O = XMP + NADH + H(+). Its pathway is purine metabolism; XMP biosynthesis via de novo pathway; XMP from IMP: step 1/1. Mycophenolic acid (MPA) is a non-competitive inhibitor that prevents formation of the closed enzyme conformation by binding to the same site as the amobile flap. In contrast, mizoribine monophosphate (MZP) is a competitive inhibitor that induces the closed conformation. MPA is a potent inhibitor of mammalian IMPDHs but a poor inhibitor of the bacterial enzymes. MZP is a more potent inhibitor of bacterial IMPDH. Catalyzes the conversion of inosine 5'-phosphate (IMP) to xanthosine 5'-phosphate (XMP), the first committed and rate-limiting step in the de novo synthesis of guanine nucleotides, and therefore plays an important role in the regulation of cell growth. The sequence is that of Inosine-5'-monophosphate dehydrogenase from Leptospira interrogans serogroup Icterohaemorrhagiae serovar Lai (strain 56601).